The following is a 301-amino-acid chain: Polyamine aminopropyltransferase (301 aa).

Residues 4–240 (WHWLLEWQTP…GLWGFVYGGV (237 aa)) enclose the PABS domain. Glutamine 33 lines the S-methyl-5'-thioadenosine pocket. The spermidine site is built by histidine 64 and glutamate 89. Residues aspartate 109 and 141-142 (DG) each bind S-methyl-5'-thioadenosine. The active-site Proton acceptor is aspartate 159.

Belongs to the spermidine/spermine synthase family. In terms of assembly, homodimer or homotetramer.

It is found in the cytoplasm. The catalysed reaction is S-adenosyl 3-(methylsulfanyl)propylamine + putrescine = S-methyl-5'-thioadenosine + spermidine + H(+). It functions in the pathway amine and polyamine biosynthesis; spermidine biosynthesis; spermidine from putrescine: step 1/1. Catalyzes the irreversible transfer of a propylamine group from the amino donor S-adenosylmethioninamine (decarboxy-AdoMet) to putrescine (1,4-diaminobutane) to yield spermidine. This is Polyamine aminopropyltransferase from Saccharolobus islandicus (strain L.S.2.15 / Lassen #1) (Sulfolobus islandicus).